A 304-amino-acid chain; its full sequence is Small ribosomal subunit protein uS3 (304 aa).

The region spanning 17-86 (IDEFFAEELG…DPQVDVQEVD (70 aa)) is the KH type-2 domain. The tract at residues 216-304 (LLEGEPEDSE…DEMDEEGDDE (89 aa)) is disordered.

The protein belongs to the universal ribosomal protein uS3 family. As to quaternary structure, part of the 30S ribosomal subunit.

Functionally, binds the lower part of the 30S subunit head. This chain is Small ribosomal subunit protein uS3, found in Haloarcula marismortui (strain ATCC 43049 / DSM 3752 / JCM 8966 / VKM B-1809) (Halobacterium marismortui).